Consider the following 335-residue polypeptide: Glycerol-3-phosphate dehydrogenase [NAD(P)+] (335 aa).

NADPH contacts are provided by Ser-12, Trp-13, and Lys-107. 3 residues coordinate sn-glycerol 3-phosphate: Lys-107, Gly-138, and Ser-140. Position 142 (Ala-142) interacts with NADPH. Lys-193, Asp-246, Ser-256, Arg-257, and Asn-258 together coordinate sn-glycerol 3-phosphate. The active-site Proton acceptor is the Lys-193. Position 257 (Arg-257) interacts with NADPH. NADPH-binding residues include Val-281 and Glu-283.

This sequence belongs to the NAD-dependent glycerol-3-phosphate dehydrogenase family.

It localises to the cytoplasm. The enzyme catalyses sn-glycerol 3-phosphate + NAD(+) = dihydroxyacetone phosphate + NADH + H(+). The catalysed reaction is sn-glycerol 3-phosphate + NADP(+) = dihydroxyacetone phosphate + NADPH + H(+). It functions in the pathway membrane lipid metabolism; glycerophospholipid metabolism. Catalyzes the reduction of the glycolytic intermediate dihydroxyacetone phosphate (DHAP) to sn-glycerol 3-phosphate (G3P), the key precursor for phospholipid synthesis. The chain is Glycerol-3-phosphate dehydrogenase [NAD(P)+] from Citrifermentans bemidjiense (strain ATCC BAA-1014 / DSM 16622 / JCM 12645 / Bem) (Geobacter bemidjiensis).